The chain runs to 279 residues: Methylthioribulose-1-phosphate dehydratase (279 aa).

C132 serves as a coordination point for substrate. Residues H150 and H152 each coordinate Zn(2+). E175 (proton donor/acceptor) is an active-site residue. H240 serves as a coordination point for Zn(2+).

Belongs to the aldolase class II family. MtnB subfamily. Requires Zn(2+) as cofactor.

It localises to the cytoplasm. It catalyses the reaction 5-(methylsulfanyl)-D-ribulose 1-phosphate = 5-methylsulfanyl-2,3-dioxopentyl phosphate + H2O. Its pathway is amino-acid biosynthesis; L-methionine biosynthesis via salvage pathway; L-methionine from S-methyl-5-thio-alpha-D-ribose 1-phosphate: step 2/6. Catalyzes the dehydration of methylthioribulose-1-phosphate (MTRu-1-P) into 2,3-diketo-5-methylthiopentyl-1-phosphate (DK-MTP-1-P). The polypeptide is Methylthioribulose-1-phosphate dehydratase (Candida tropicalis (strain ATCC MYA-3404 / T1) (Yeast)).